The sequence spans 267 residues: uncharacterized protein (267 aa).

To S.pombe SpAC18G6.12c.

This is an uncharacterized protein from Schizosaccharomyces pombe (strain 972 / ATCC 24843) (Fission yeast).